Here is a 265-residue protein sequence, read N- to C-terminus: uncharacterized protein (265 aa).

It localises to the mitochondrion. This is an uncharacterized protein from Paramecium tetraurelia.